A 282-amino-acid polypeptide reads, in one-letter code: NADPH-dependent 7-cyano-7-deazaguanine reductase (282 aa).

88 to 90 serves as a coordination point for substrate; it reads IES. Residue 90–91 coordinates NADPH; it reads SK. Residue Cys190 is the Thioimide intermediate of the active site. Asp197 serves as the catalytic Proton donor. Residue 229–230 participates in substrate binding; it reads HE. Position 258 to 259 (258 to 259) interacts with NADPH; sequence RG.

This sequence belongs to the GTP cyclohydrolase I family. QueF type 2 subfamily. Homodimer.

It is found in the cytoplasm. The enzyme catalyses 7-aminomethyl-7-carbaguanine + 2 NADP(+) = 7-cyano-7-deazaguanine + 2 NADPH + 3 H(+). It functions in the pathway tRNA modification; tRNA-queuosine biosynthesis. In terms of biological role, catalyzes the NADPH-dependent reduction of 7-cyano-7-deazaguanine (preQ0) to 7-aminomethyl-7-deazaguanine (preQ1). This is NADPH-dependent 7-cyano-7-deazaguanine reductase from Pectobacterium carotovorum subsp. carotovorum (strain PC1).